The following is a 448-amino-acid chain: Tubulin beta-1 chain (448 aa).

Gln11, Glu69, Ser138, Gly142, Thr143, Gly144, Asn204, and Asn226 together coordinate GTP. Glu69 lines the Mg(2+) pocket. The interval 428–448 is disordered; sequence AGIGDDEEEDEEGVMGEEIDA. The segment covering 430 to 448 has biased composition (acidic residues); that stretch reads IGDDEEEDEEGVMGEEIDA.

It belongs to the tubulin family. Dimer of alpha and beta chains. A typical microtubule is a hollow water-filled tube with an outer diameter of 25 nm and an inner diameter of 15 nM. Alpha-beta heterodimers associate head-to-tail to form protofilaments running lengthwise along the microtubule wall with the beta-tubulin subunit facing the microtubule plus end conferring a structural polarity. Microtubules usually have 13 protofilaments but different protofilament numbers can be found in some organisms and specialized cells. Mg(2+) serves as cofactor.

It localises to the cytoplasm. Its subcellular location is the cytoskeleton. Functionally, tubulin is the major constituent of microtubules, a cylinder consisting of laterally associated linear protofilaments composed of alpha- and beta-tubulin heterodimers. Microtubules grow by the addition of GTP-tubulin dimers to the microtubule end, where a stabilizing cap forms. Below the cap, tubulin dimers are in GDP-bound state, owing to GTPase activity of alpha-tubulin. This chain is Tubulin beta-1 chain (TUB-1), found in Echinococcus multilocularis (Fox tapeworm).